The chain runs to 297 residues: 4-hydroxy-tetrahydrodipicolinate synthase (297 aa).

T46 contributes to the pyruvate binding site. Y134 serves as the catalytic Proton donor/acceptor. Residue K162 is the Schiff-base intermediate with substrate of the active site. Pyruvate is bound at residue I204.

It belongs to the DapA family. Homotetramer; dimer of dimers.

It localises to the cytoplasm. It catalyses the reaction L-aspartate 4-semialdehyde + pyruvate = (2S,4S)-4-hydroxy-2,3,4,5-tetrahydrodipicolinate + H2O + H(+). Its pathway is amino-acid biosynthesis; L-lysine biosynthesis via DAP pathway; (S)-tetrahydrodipicolinate from L-aspartate: step 3/4. In terms of biological role, catalyzes the condensation of (S)-aspartate-beta-semialdehyde [(S)-ASA] and pyruvate to 4-hydroxy-tetrahydrodipicolinate (HTPA). The protein is 4-hydroxy-tetrahydrodipicolinate synthase of Stenotrophomonas maltophilia (strain K279a).